The sequence spans 323 residues: MEVQAEMEPTSSISLVAAVSYGIASMAMVFINKAVIMQYPHSMTVLTLQQLATSLLIHFGRRMGYTRAKGIDMATAKKLLPVSIFYNANVAFALASLKGVNIPMYIAIKRLTPLAVLISGVLFGKGKPTTQVALSVLLTAAGCVIAALGDFSFDLFGYGLALTSVFFQTMYLVLVEKSGAEDGLSSIEIMFYNSFLSLPFLSILIIVTGEFPNSLSLLLAKCSYLPFLVILILSLVMGIVLNFTMFLCTIVNSALTTTIVGVLKGVGSTTLGFVLLGGVEVHALNVSGLVVNTAGGVWYSYAKYRQKKAKPAKLMSDLEAHKK.

Residues 1–10 (MEVQAEMEPT) lie on the Cytoplasmic side of the membrane. Residues 11 to 31 (SSISLVAAVSYGIASMAMVFI) traverse the membrane as a helical segment. Residues 32 to 35 (NKAV) lie on the Lumenal side of the membrane. Residues 36 to 58 (IMQYPHSMTVLTLQQLATSLLIH) traverse the membrane as a helical segment. At 59-78 (FGRRMGYTRAKGIDMATAKK) the chain is on the cytoplasmic side. Residues 79–97 (LLPVSIFYNANVAFALASL) traverse the membrane as a helical segment. Residues 98-101 (KGVN) are Lumenal-facing. Residues 102–124 (IPMYIAIKRLTPLAVLISGVLFG) traverse the membrane as a helical segment. Over 125–132 (KGKPTTQV) the chain is Cytoplasmic. A helical transmembrane segment spans residues 133–153 (ALSVLLTAAGCVIAALGDFSF). D154 is a topological domain (lumenal). A helical transmembrane segment spans residues 155-175 (LFGYGLALTSVFFQTMYLVLV). The Cytoplasmic segment spans residues 176 to 186 (EKSGAEDGLSS). A helical membrane pass occupies residues 187 to 207 (IEIMFYNSFLSLPFLSILIIV). The Lumenal portion of the chain corresponds to 208–226 (TGEFPNSLSLLLAKCSYLP). A helical transmembrane segment spans residues 227 to 247 (FLVILILSLVMGIVLNFTMFL). Residues 248–252 (CTIVN) are Cytoplasmic-facing. The helical transmembrane segment at 253 to 275 (SALTTTIVGVLKGVGSTTLGFVL) threads the bilayer. Over 276–278 (LGG) the chain is Lumenal. The helical transmembrane segment at 279–301 (VEVHALNVSGLVVNTAGGVWYSY) threads the bilayer. Residues 302 to 323 (AKYRQKKAKPAKLMSDLEAHKK) are Cytoplasmic-facing.

It belongs to the TPT transporter family. UGnT (TC 2.A.7.15) subfamily. Widely expressed with highest expression in roots.

It is found in the golgi apparatus membrane. In terms of biological role, nucleotide-sugar transporter that transports UDP-glucose and UDP-galactose. Plays a role in lateral root and root hair development. This Arabidopsis thaliana (Mouse-ear cress) protein is UDP-galactose/UDP-glucose transporter 7.